The following is a 185-amino-acid chain: Ribosome maturation factor RimM (185 aa).

Residues 103-177 (SEEYYWYEIL…SIIVKKIEWY (75 aa)) enclose the PRC barrel domain.

Belongs to the RimM family. In terms of assembly, binds ribosomal protein uS19.

It is found in the cytoplasm. Its function is as follows. An accessory protein needed during the final step in the assembly of 30S ribosomal subunit, possibly for assembly of the head region. Essential for efficient processing of 16S rRNA. May be needed both before and after RbfA during the maturation of 16S rRNA. It has affinity for free ribosomal 30S subunits but not for 70S ribosomes. The protein is Ribosome maturation factor RimM of Petrotoga mobilis (strain DSM 10674 / SJ95).